The chain runs to 70 residues: DNA-directed RNA polymerase subunit omega (70 aa).

This sequence belongs to the RNA polymerase subunit omega family. In terms of assembly, the RNAP catalytic core consists of 2 alpha, 1 beta, 1 beta' and 1 omega subunit. When a sigma factor is associated with the core the holoenzyme is formed, which can initiate transcription.

It catalyses the reaction RNA(n) + a ribonucleoside 5'-triphosphate = RNA(n+1) + diphosphate. Promotes RNA polymerase assembly. Latches the N- and C-terminal regions of the beta' subunit thereby facilitating its interaction with the beta and alpha subunits. This is DNA-directed RNA polymerase subunit omega from Thermoanaerobacter sp. (strain X514).